Here is a 599-residue protein sequence, read N- to C-terminus: uncharacterized protein (599 aa).

Residues 1-13 show a composition bias toward low complexity; it reads MSSSSSHNSFSGS. Disordered stretches follow at residues 1 to 27 and 41 to 86; these read MSSS…IDGL and YPSN…DDTN. Over residues 14 to 27 the composition is skewed to polar residues; sequence KTNAAEGQNSIDGL. Positions 44–70 are enriched in basic and acidic residues; sequence NEEKEVKETDIVPDENKVNELDVHKQS. 14 helical membrane passes run 97-117, 135-155, 162-182, 192-212, 223-243, 251-271, 290-310, 321-341, 359-379, 396-416, 423-443, 452-472, 489-509, and 552-572; these read IVVP…TIVT, WIGS…GVFC, IVLY…GASQ, AIQG…ISDI, GILA…GGAI, WIFF…VVFL, FIGL…ISLG, ILCY…YDTF, AALL…AYYV, VHTI…GMVL, LPLI…MICV, VMGL…PPLI, TLMF…EVIF, and VIWI…FFIK.

Belongs to the major facilitator superfamily. TCR/Tet family.

Its subcellular location is the membrane. This is an uncharacterized protein from Schizosaccharomyces pombe (strain 972 / ATCC 24843) (Fission yeast).